We begin with the raw amino-acid sequence, 296 residues long: Elongation factor Ts (296 aa).

Residues 82 to 85 (TDFV) are involved in Mg(2+) ion dislocation from EF-Tu.

This sequence belongs to the EF-Ts family.

It is found in the cytoplasm. Its function is as follows. Associates with the EF-Tu.GDP complex and induces the exchange of GDP to GTP. It remains bound to the aminoacyl-tRNA.EF-Tu.GTP complex up to the GTP hydrolysis stage on the ribosome. This is Elongation factor Ts from Coxiella burnetii (strain CbuK_Q154) (Coxiella burnetii (strain Q154)).